The primary structure comprises 247 residues: E3 SUMO-protein ligase NSE2 (247 aa).

Methionine 1 bears the N-acetylmethionine mark. Glycyl lysine isopeptide (Lys-Gly) (interchain with G-Cter in SUMO2) cross-links involve residues lysine 90 and lysine 107. Serine 116 is subject to Phosphoserine. Glycyl lysine isopeptide (Lys-Gly) (interchain with G-Cter in SUMO2) cross-links involve residues lysine 125 and lysine 130. Residues 154 to 240 (MDEDMIVTQS…LRRAIESHNK (87 aa)) form an SP-RING-type zinc finger. Zn(2+) is bound by residues cysteine 185, histidine 187, cysteine 210, and cysteine 215.

The protein belongs to the NSE2 family. In terms of assembly, component of the SMC5-SMC6 complex which consists at least of SMC5, SMC6, NSMCE2, NSMCE1, NSMCE4A or EID3 and NSMCE3. Post-translationally, sumoylated, possibly via autosumoylation.

Its subcellular location is the nucleus. It is found in the chromosome. The protein resides in the telomere. It localises to the PML body. It functions in the pathway protein modification; protein sumoylation. Its function is as follows. E3 SUMO-protein ligase component of the SMC5-SMC6 complex, a complex involved in DNA double-strand break repair by homologous recombination. Is not be required for the stability of the complex. The complex may promote sister chromatid homologous recombination by recruiting the SMC1-SMC3 cohesin complex to double-strand breaks. Acts as an E3 ligase mediating SUMO attachment to various proteins such as SMC6L1 and TSNAX, the shelterin complex subunits TERF1, TERF2, TINF2 and TERF2IP, RAD51AP1, and maybe the cohesin components RAD21 and STAG2. Required for recruitment of telomeres to PML nuclear bodies. Required for sister chromatid cohesion during prometaphase and mitotic progression. The chain is E3 SUMO-protein ligase NSE2 (Nsmce2) from Rattus norvegicus (Rat).